The sequence spans 594 residues: MRRRPLCTSASRVTASLLLSFLAVSSAAELPILPAPPISPQPHSSEKDFSLRHIFHHGTYKYPELHRRLDVPENAAVWAAEHLHSEHREPVPRLRVKAEPMSIQRLADRSKEAIDGILEWGRMKGRAVQLAEDDWTIDEIAGPNVTDRETVLSFARMASNAYILEPNTGEWEDVGGGFNYTEDFGWESDGLRGHIFADTENSTVVIGLKGTSPAMFDGSETTTKDKENDNLFFSCCCGQGGQFLWRQVCDCQTSAYTCNSTCLVTALREKNRYYYAAQDLYHNVTALYPHAEIWMAGHSLGGAVSSFLSLTFGHPAVTFEAVPEAMPASRLGLPVPPGHEIGSLQKRKMTGGYHFGHTADPIYMGQCNQATSVCTFGGYALQSVCHTGKKCVYDTVKDLGWRVGIGTHKIVEVIKDVIEKYDAPPICEPYINCTDCYTWKYFESNGTETTTTSTSKPTSTSKSSKSNTRTRTETCKTPGWWGCLDETTTGTQTSTSTPKHTSTSSTSTCKTPGWFGCKGRQRRANHNNNKVLAHNYPRPSTHRNNNILFLPNINFFMSVPRLVRRLSRRRRPSLPNKTEVVNSSANHFVYVLHA.

Residues 1-12 (MRRRPLCTSASR) lie on the Cytoplasmic side of the membrane. The helical; Signal-anchor for type II membrane protein transmembrane segment at 13–33 (VTASLLLSFLAVSSAAELPIL) threads the bilayer. The Lumenal portion of the chain corresponds to 34–594 (PAPPISPQPH…ANHFVYVLHA (561 aa)). 5 N-linked (GlcNAc...) asparagine glycosylation sites follow: Asn-144, Asn-179, Asn-201, Asn-259, and Asn-283. Catalysis depends on Ser-299, which acts as the Charge relay system. N-linked (GlcNAc...) asparagine glycans are attached at residues Asn-432 and Asn-445. The segment covering 447-469 (TETTTTSTSKPTSTSKSSKSNTR) has biased composition (low complexity). Disordered stretches follow at residues 447–473 (TETT…TRTE) and 489–509 (TGTQ…TSTC). Asn-576 and Asn-582 each carry an N-linked (GlcNAc...) asparagine glycan.

This sequence belongs to the AB hydrolase superfamily. Lipase family. As to quaternary structure, binds to both phosphatidylinositol (PI) and phosphatidylinositol 3,5-bisphosphate (PIP2).

The protein localises to the endosome. It is found in the multivesicular body membrane. The protein resides in the prevacuolar compartment membrane. The enzyme catalyses a triacylglycerol + H2O = a diacylglycerol + a fatty acid + H(+). In terms of biological role, lipase which is essential for lysis of subvacuolar cytoplasm to vacuole targeted bodies and intravacuolar autophagic bodies. Involved in the lysis of intravacuolar multivesicular body (MVB) vesicles. The intravacuolar membrane disintegration by ATG15 is critical to life span extension. In Phaeosphaeria nodorum (strain SN15 / ATCC MYA-4574 / FGSC 10173) (Glume blotch fungus), this protein is Putative lipase ATG15-1 (ATG15-1).